The chain runs to 476 residues: Cytochrome c oxidase subunit 1 (476 aa).

Residues 19 to 39 (LYYLWFSFLFGSYGFLLSVIL) traverse the membrane as a helical segment. Glu42 serves as a coordination point for Ca(2+). The next 8 helical transmembrane spans lie at 61-81 (MIFT…GLFG), 105-125 (ISLL…AAEF), 151-171 (VIIF…LNFI), 194-214 (LIIT…GVLM), 240-260 (LFWF…FGVI), 278-298 (MILA…HHMY), 310-330 (FTST…NWIC), and 345-365 (LLSL…VILG). A Fe(II)-heme a-binding site is contributed by His66. His246 contributes to the Cu cation binding site. The segment at residues 246–250 (HPEVY) is a cross-link (1'-histidyl-3'-tyrosine (His-Tyr)). Residue Tyr250 coordinates O2. Cu cation-binding residues include His295 and His296. Residues His374 and Asp375 each contribute to the Mg(2+) site. 2 consecutive transmembrane segments (helical) span residues 379–399 (VIAH…FTTV) and 415–435 (SIVI…FLPM). His382 serves as a coordination point for heme a3. His384 is a Fe(II)-heme a binding site. Pro448 is a Ca(2+) binding site. The helical transmembrane segment at 455–475 (NGWNMICSIGSTMTLFGLLIF) threads the bilayer.

It belongs to the heme-copper respiratory oxidase family. In terms of assembly, component of the cytochrome c oxidase (complex IV, CIV), a multisubunit enzyme composed of a catalytic core of 3 subunits and several supernumerary subunits. The complex exists as a monomer or a dimer and forms supercomplexes (SCs) in the inner mitochondrial membrane with ubiquinol-cytochrome c oxidoreductase (cytochrome b-c1 complex, complex III, CIII). Heme serves as cofactor. It depends on Cu cation as a cofactor.

The protein resides in the mitochondrion inner membrane. It catalyses the reaction 4 Fe(II)-[cytochrome c] + O2 + 8 H(+)(in) = 4 Fe(III)-[cytochrome c] + 2 H2O + 4 H(+)(out). Its pathway is energy metabolism; oxidative phosphorylation. Component of the cytochrome c oxidase, the last enzyme in the mitochondrial electron transport chain which drives oxidative phosphorylation. The respiratory chain contains 3 multisubunit complexes succinate dehydrogenase (complex II, CII), ubiquinol-cytochrome c oxidoreductase (cytochrome b-c1 complex, complex III, CIII) and cytochrome c oxidase (complex IV, CIV), that cooperate to transfer electrons derived from NADH and succinate to molecular oxygen, creating an electrochemical gradient over the inner membrane that drives transmembrane transport and the ATP synthase. Cytochrome c oxidase is the component of the respiratory chain that catalyzes the reduction of oxygen to water. Electrons originating from reduced cytochrome c in the intermembrane space (IMS) are transferred via the dinuclear copper A center (CU(A)) of subunit 2 and heme A of subunit 1 to the active site in subunit 1, a binuclear center (BNC) formed by heme A3 and copper B (CU(B)). The BNC reduces molecular oxygen to 2 water molecules using 4 electrons from cytochrome c in the IMS and 4 protons from the mitochondrial matrix. This Plasmodium falciparum protein is Cytochrome c oxidase subunit 1 (MT-CO1).